The chain runs to 154 residues: MLLPDWKIRKEILIKPFSEESLQPAGYDLRVGKEAYIQGKFIDVEKEGKVIIPPKEYALILTLERIKLPDDIMGDMKIRSSLAREGVLGSFAWVDPGWDGNLTLMLYNASEKEVILRYKERFVQIAFLRLEAPAKNPYRGNYQGSRRIVLSKRS.

DCTP contacts are provided by residues arginine 79–arginine 84, aspartate 95, glutamine 124, and tyrosine 138.

The protein belongs to the dCTP deaminase family. As to quaternary structure, homotrimer.

The enzyme catalyses dCTP + H2O + H(+) = dUTP + NH4(+). The protein operates within pyrimidine metabolism; dUMP biosynthesis; dUMP from dCTP (dUTP route): step 1/2. Catalyzes the deamination of dCTP to dUTP. This Pyrococcus abyssi (strain GE5 / Orsay) protein is dCTP deaminase.